Consider the following 351-residue polypeptide: MYSLARPFLFSLDAERAHALALRSIDTAYRTGTTALLARRPVPLPTPAFGLMFPNPVGLGAGLDKNGEHIDALFALGFGFVEIGTVTPRAQEGNPKPRMFRLPEYQAVINRMGFNNLGVDALVANVQRARRTGGLLGINIGKNKDTSNEEATSDYRYCMERVYPLADYITVNISSPNTAGLRELQEEQSLRRLISDLRETQEALSAQHGKRVPMLVKVAPDLNDRDIDAAARVLADLAVDGVIATNTTVTRTLVANHPLAAEAGGLSGAPLLGQSTLVLRRLRARLPESIPLIGVGGINSGADAVAKMAAGASLVQCYSGLVYRGPQLIGECVNAIRRRREAPSGGAVSPL.

Residues A61–K65 and T85 contribute to the FMN site. Position 65 (K65) interacts with substrate. N110–F114 provides a ligand contact to substrate. Positions 139 and 172 each coordinate FMN. N172 lines the substrate pocket. S175 acts as the Nucleophile in catalysis. Residue N177 coordinates substrate. Residues K217 and T245 each contribute to the FMN site. Residue N246–T247 coordinates substrate. Residues G268, G297, and Y318 to S319 contribute to the FMN site.

It belongs to the dihydroorotate dehydrogenase family. Type 2 subfamily. Monomer. FMN serves as cofactor.

Its subcellular location is the cell membrane. The catalysed reaction is (S)-dihydroorotate + a quinone = orotate + a quinol. The protein operates within pyrimidine metabolism; UMP biosynthesis via de novo pathway; orotate from (S)-dihydroorotate (quinone route): step 1/1. Its function is as follows. Catalyzes the conversion of dihydroorotate to orotate with quinone as electron acceptor. The protein is Dihydroorotate dehydrogenase (quinone) of Xanthomonas axonopodis pv. citri (strain 306).